An 895-amino-acid polypeptide reads, in one-letter code: Putative endoplasmic reticulum metallopeptidase 1-A (895 aa).

The disordered stretch occupies residues 1-30; it reads MLRRRGGPNELRDELNNSKNQPEDDQRTKR. The Cytoplasmic portion of the chain corresponds to 1–34; the sequence is MLRRRGGPNELRDELNNSKNQPEDDQRTKRGRES. Positions 10–30 are enriched in basic and acidic residues; that stretch reads ELRDELNNSKNQPEDDQRTKR. A helical transmembrane segment spans residues 35–55; it reads IGFRHWIYFVLTVAIVYAGVV. Topologically, residues 56 to 383 are lumenal; the sequence is ALHRKMPAVR…VVGLFTVYYS (328 aa). Zn(2+)-binding residues include His-174 and Asp-186. The active-site Proton acceptor is the Glu-220. The Zn(2+) site is built by Glu-221, Glu-247, and His-323. A helical transmembrane segment spans residues 384-404; sequence VNVGKLLNYIACFATYFLVVL. The Cytoplasmic segment spans residues 405–423; it reads RIRNRLYSVGDLAIAFKHH. The chain crosses the membrane as a helical span at residues 424–444; it reads VVAFLAMVITMLLIIAFVVQM. At 445–452 the chain is on the lumenal side; the sequence is DLVMCWYK. The helical transmembrane segment at 453-473 threads the bilayer; sequence MPEIVGALYVLPMLIAGAIVH. Over 474–492 the chain is Cytoplasmic; that stretch reads SHYADNNRIRNVEMVQYDT. Residues 493–513 form a helical membrane-spanning segment; that stretch reads ILLSFASILFLMTFYNLSSAF. Over 514–517 the chain is Lumenal; it reads YVLN. A helical membrane pass occupies residues 518 to 538; that stretch reads NLILPVFKDIIIWALGLFGVI. Residues 539–544 lie on the Cytoplasmic side of the membrane; it reads RRVTPR. A helical transmembrane segment spans residues 545 to 565; sequence VLFFTQLFCFLPTFVFAAYAI. Residues 566 to 586 lie on the Lumenal side of the membrane; sequence SQCVDFFVPVMGRLGNAINPE. Residues 587–607 traverse the membrane as a helical segment; it reads FIMGPLGLVIASGFILFVNNL. Topologically, residues 608–613 are cytoplasmic; the sequence is FYISRR. The chain crosses the membrane as a helical span at residues 614-634; sequence MNYIIRLLFAIFALFILVLIT. Topologically, residues 635–895 are lumenal; that stretch reads TKVGNPYEYS…GRSEIVVKIF (261 aa). N-linked (GlcNAc...) asparagine glycosylation is found at Asn-659, Asn-702, and Asn-758.

This sequence belongs to the peptidase M28 family. Requires Zn(2+) as cofactor.

The protein localises to the endoplasmic reticulum membrane. The polypeptide is Putative endoplasmic reticulum metallopeptidase 1-A (Caenorhabditis elegans).